An 859-amino-acid polypeptide reads, in one-letter code: Anoctamin-7 (859 aa).

Over 1–297 (MLRGQAREED…YFAWLGFYTG (297 aa)) the chain is Cytoplasmic. The tract at residues 25-50 (GCSYGSTAQASEAGKQQVAPSRVGSS) is disordered. The helical transmembrane segment at 298-318 (WLLPAAVVGTVVFLVGCFLVF) threads the bilayer. Topologically, residues 319–362 (SDIPTQELCHSSDSFDMCPLCSDCSFWLLSSACTLAQAGRLFDH) are extracellular. Residues 363 to 383 (GGTVFFSLFMALWAVLLLEYW) form a helical membrane-spanning segment. Over 384–441 (KRKNATLAYRWDCSDYEDIEERPRPQFAATAPMTALNPITGEDEPYFPEKNRVRRMLA) the chain is Cytoplasmic. A helical transmembrane segment spans residues 442 to 462 (GSVVLLMMVAVVIMCLVSVIL). Over 463 to 492 (YRAVMAIIVSRSDNAFLSAWASRIASLTGS) the chain is Extracellular. Residues 493–513 (VVNLVFILILSKVYVLLAQVL) form a helical membrane-spanning segment. The Cytoplasmic segment spans residues 514 to 530 (TRWEMHRTQTEFEDAFT). The helical transmembrane segment at 531 to 551 (LKVFIFQFVNFYASPVYIAFF) threads the bilayer. At 552-651 (KGRFVGYPGN…FHEYLEMVLQ (100 aa)) the chain is on the extracellular side. Residues 652–672 (FGFVTIFVAACPLAPLFALLN) form a helical membrane-spanning segment. Residues 673 to 700 (NWVEIRLDARKFVCEYRRPVAERAQDIG) lie on the Cytoplasmic side of the membrane. Residues 701–721 (IWFHILTGLTHLAVISNAFLL) traverse the membrane as a helical segment. Topologically, residues 722 to 780 (AFSSDFLPRVYYSWTHAPDLHGFLNFTLARAPPTFTSAHNRTCRYRAFRDDDGHYSPTY) are extracellular. N-linked (GlcNAc...) asparagine glycosylation is found at Asn-746 and Asn-761. The chain crosses the membrane as a helical span at residues 781-801 (WTLLAIRLAFVIVFEHVVFSI). Over 802–859 (GRVLDLLVPDIPESVEIKVKREYYLAKQALAENEALLGATGVKDDQPPSSEPSLGLPA) the chain is Cytoplasmic.

The protein belongs to the anoctamin family. As to expression, highly expressed in the stomach. Expressed at low levels in small intestine and large intestine.

The protein resides in the cell membrane. The protein localises to the endoplasmic reticulum. The enzyme catalyses a 1,2-diacyl-sn-glycero-3-phospho-L-serine(in) = a 1,2-diacyl-sn-glycero-3-phospho-L-serine(out). It catalyses the reaction a beta-D-galactosyl-(1&lt;-&gt;1')-N-acylsphing-4-enine(out) = a beta-D-galactosyl-(1&lt;-&gt;1')-N-acylsphing-4-enine(in). The catalysed reaction is a 1,2-diacyl-sn-glycero-3-phosphocholine(in) = a 1,2-diacyl-sn-glycero-3-phosphocholine(out). In terms of biological role, has calcium-dependent phospholipid scramblase activity; scrambles phosphatidylserine, phosphatidylcholine and galactosylceramide. Does not exhibit calcium-activated chloride channel (CaCC) activity. May play a role in cell-cell interactions. The sequence is that of Anoctamin-7 (Ano7) from Mus musculus (Mouse).